Consider the following 151-residue polypeptide: Monooxygenase nsrQ (151 aa).

Belongs to the avfA family.

The protein operates within secondary metabolite biosynthesis. Functionally, monooxygenase; part of the gene cluster that mediates the biosynthesis of the tetrahydroxanthone dimer neosartorin, which exhibits antibacterial activity. The two different monomeric units appear to be synthesized by the same set of enzymes, among which the Baeyer-Villiger monooxygenase nsrF is the key enzyme for the divergence of the biosynthetic routes. The pathway begins with the synthesis of atrochrysone thioester by the polyketide synthase nsrB. The atrochrysone carboxyl ACP thioesterase nsrC then breaks the thioester bond and releases the atrochrysone carboxylic acid from AacuL. Atrochrysone carboxylic acid is decarboxylated by the decarboxylase nsrE, and oxidized by the anthrone oxygenase nsrD to yield emodin. Emodin is then reduced to emodin hydroquinone by the oxidoreductase nsrR. A-ring reduction by the short chain dehydrogenase nsrJ, dehydration by the scytalone dehydratase-like protein nsrI and probable spontaneous re-oxidation, results in overall deoxygenation to chrysophanol. The Baeyer-Villiger monooxygenase nsrF accepts chrysophanol as a substrate to insert one oxygen atom at two different positions to yield the precursors of both monomric units. NsrF is promiscuous/flexible in interacting with the 2 (non methylated and methylated) aromatic rings of chrysophanol, thus diverging the biosynthetic pathway at this point. After the hydrolysis of the lactones, methylesterification by the methyltransferase nsrG yields respectively moniliphenone and 2,2',6'-trihydroxy-4-methyl-6-methoxya-cyldiphenylmethanone. The next steps are the hydroxylation by the FAD-dependent monooxygenase nsrK, followed by isomerization by the monooxygenase nsrQ. The short chain dehydrogenase/reductase nsrO then catalyzes the C-5 ketoreduction to give the xanthone skeleton of blennolide C and 5-acetylblennolide A. The acetyltransferase nsrL has a strict substrate specificity and uses only blennolide A but not blennolide C to yield 5-acetylblennolide A as the single-acetylated product. In the final step of the biosynthesis, the heterodimerization of the 2 xanthones, blennolide C and 5-acetylblennolide A, is catalyzed by the cytochrome P450 monooxygenase nsrP. NsrP can utilize at least three different xanthones as its substrates to perform the dimerization reaction. This is Monooxygenase nsrQ from Aspergillus novofumigatus (strain IBT 16806).